A 184-amino-acid polypeptide reads, in one-letter code: Nutrient stress-induced DNA-binding protein (184 aa).

The protein belongs to the Dps family. Hexamer.

Functionally, involved in protection of chromosomal DNA from damage under nutrient-limited and oxidative stress conditions. Binds heme. The sequence is that of Nutrient stress-induced DNA-binding protein (dpsA) from Nostoc sp. (strain PCC 7120 / SAG 25.82 / UTEX 2576).